The primary structure comprises 188 residues: Peptidyl-tRNA hydrolase (188 aa).

A tRNA-binding site is contributed by Tyr-14. His-19 (proton acceptor) is an active-site residue. Residues Tyr-64, Asn-66, and Asn-112 each coordinate tRNA.

The protein belongs to the PTH family. Monomer.

Its subcellular location is the cytoplasm. The enzyme catalyses an N-acyl-L-alpha-aminoacyl-tRNA + H2O = an N-acyl-L-amino acid + a tRNA + H(+). Functionally, hydrolyzes ribosome-free peptidyl-tRNAs (with 1 or more amino acids incorporated), which drop off the ribosome during protein synthesis, or as a result of ribosome stalling. In terms of biological role, catalyzes the release of premature peptidyl moieties from peptidyl-tRNA molecules trapped in stalled 50S ribosomal subunits, and thus maintains levels of free tRNAs and 50S ribosomes. This chain is Peptidyl-tRNA hydrolase, found in Clostridium perfringens (strain ATCC 13124 / DSM 756 / JCM 1290 / NCIMB 6125 / NCTC 8237 / Type A).